Here is a 500-residue protein sequence, read N- to C-terminus: Carnosic acid synthase (500 aa).

Residues 4 to 24 (LILLSLAFLASCVVAYSRRRP) traverse the membrane as a helical segment. Residue Cys443 participates in heme binding.

Belongs to the cytochrome P450 family. Requires heme as cofactor. As to expression, mostly expressed in young leaves, particularly in glandular trichomes.

Its subcellular location is the membrane. It carries out the reaction 11-hydroxyferruginol + 3 reduced [NADPH--hemoprotein reductase] + 3 O2 = carnosate + 3 oxidized [NADPH--hemoprotein reductase] + 4 H2O + 4 H(+). The catalysed reaction is miltiradiene + 2 reduced [NADPH--hemoprotein reductase] + 2 O2 = miltiradien-20-al + 2 oxidized [NADPH--hemoprotein reductase] + 3 H2O + 2 H(+). The enzyme catalyses ferruginol + 3 reduced [NADPH--hemoprotein reductase] + 3 O2 = pisiferate + 3 oxidized [NADPH--hemoprotein reductase] + 4 H2O + 4 H(+). Its pathway is secondary metabolite biosynthesis; terpenoid biosynthesis. Functionally, monooxygenase involved in the biosynthesis of carnosate, a potent antioxidant labdane-related diterpene natural product. Catalyzes the oxidation of 11-hydroxyferruginol to produce carnosate. Mediates the conversion of miltiradien into miltiradien-20-al. Also involved in the production of pisiferic acid and derivative products from ferruginol. This Salvia fruticosa (Greek sage) protein is Carnosic acid synthase.